Here is a 587-residue protein sequence, read N- to C-terminus: Synaptotagmin-3 (587 aa).

Over 1–54 the chain is Vesicular; that stretch reads MSGDYEDDLCRRALILVSDLCARVRDADTNDRCQEFNELRIRGYPRGPDADISV. Positions 10-34 are cysteine motif; that stretch reads CRRALILVSDLCARVRDADTNDRCQ. A helical membrane pass occupies residues 55 to 75; the sequence is SLLSVIVTFCGIVLLGVSLFV. The Cytoplasmic portion of the chain corresponds to 76–587; it reads SWKLCWVPWR…KGLSEKENSE (512 aa). The span at 183-205 shows a compositional bias: low complexity; that stretch reads PSQTSPELPSEGGTGSGLLLLPP. The interval 183–258 is disordered; the sequence is PSQTSPELPS…EERPPALPLP (76 aa). Positions 213–224 are enriched in polar residues; that stretch reads AQSHQQVTSLAP. Residues 229 to 244 are compositionally biased toward low complexity; sequence PALPRPLTQQTLTTQA. Omega-N-methylarginine is present on R286. C2 domains follow at residues 296 to 417 and 428 to 562; these read PCGR…PLWR and DLGE…EHWH. Ca(2+)-binding residues include D327, D333, D385, F386, D387, S390, D393, D459, D465, D519, and D521.

This sequence belongs to the synaptotagmin family. As to quaternary structure, homodimer; disulfide-linked via the cysteine motif. Can also form heterodimers with SYT6, SYT9 and SYT10. Ca(2+) is required as a cofactor.

The protein localises to the cell membrane. Its subcellular location is the cytoplasmic vesicle. The protein resides in the secretory vesicle membrane. In terms of biological role, ca(2+) sensor involved in Ca(2+)-dependent exocytosis of secretory vesicles through Ca(2+) and phospholipid binding to the C2 domain. Ca(2+) induces binding of the C2-domains to phospholipid membranes and to assembled SNARE-complexes; both actions contribute to triggering exocytosis. Plays a role in dendrite formation by melanocytes. In Mus musculus (Mouse), this protein is Synaptotagmin-3 (Syt3).